Here is a 417-residue protein sequence, read N- to C-terminus: Serine hydroxymethyltransferase (417 aa).

(6S)-5,6,7,8-tetrahydrofolate contacts are provided by residues leucine 121 and 125–127 (GHL). An N6-(pyridoxal phosphate)lysine modification is found at lysine 229. 355–357 (SPF) contributes to the (6S)-5,6,7,8-tetrahydrofolate binding site.

It belongs to the SHMT family. Homodimer. The cofactor is pyridoxal 5'-phosphate.

The protein resides in the cytoplasm. It carries out the reaction (6R)-5,10-methylene-5,6,7,8-tetrahydrofolate + glycine + H2O = (6S)-5,6,7,8-tetrahydrofolate + L-serine. Its pathway is one-carbon metabolism; tetrahydrofolate interconversion. It functions in the pathway amino-acid biosynthesis; glycine biosynthesis; glycine from L-serine: step 1/1. In terms of biological role, catalyzes the reversible interconversion of serine and glycine with tetrahydrofolate (THF) serving as the one-carbon carrier. This reaction serves as the major source of one-carbon groups required for the biosynthesis of purines, thymidylate, methionine, and other important biomolecules. Also exhibits THF-independent aldolase activity toward beta-hydroxyamino acids, producing glycine and aldehydes, via a retro-aldol mechanism. The chain is Serine hydroxymethyltransferase from Salmonella schwarzengrund (strain CVM19633).